The following is a 2241-amino-acid chain: Little elongation complex subunit 1 (2241 aa).

A coiled-coil region spans residues 22–185 (CASLQQNLNE…KQKNEKELRH (164 aa)). Basic and acidic residues-rich tracts occupy residues 222 to 233 (GEGGRRIPEKPA) and 296 to 315 (AFCE…DGNR). Disordered regions lie at residues 222–255 (GEGG…GGPA), 273–315 (GDFS…DGNR), and 368–387 (GEFT…SMES). The residue at position 523 (S523) is a Phosphoserine. The interval 552–590 (EFSKRTLTDGSASKSPCVTGSGRFQRRERDVRESTPQSG) is disordered. Positions 559–569 (TDGSASKSPCV) are enriched in polar residues. A Phosphoserine modification is found at S676. The tract at residues 703-817 (TAKGHSLPQS…PSGESTIPPE (115 aa)) is disordered. Over residues 718–728 (TGGGQCKGRGP) the composition is skewed to gly residues. The span at 738 to 760 (DWTSLARSQAGFTRRSSGSADST) shows a compositional bias: polar residues. T803 carries the phosphothreonine modification. Position 896 is a phosphoserine (S896). The segment at 971–1119 (SGVTSGVFPA…VGEAGHPSDV (149 aa)) is disordered. Residues 1065–1074 (EEDTEVEDEA) are compositionally biased toward acidic residues. The span at 1091–1104 (RQQEQAEDSHRPLG) shows a compositional bias: basic and acidic residues. K1189 is modified (N6-acetyllysine). 3 disordered regions span residues 1231 to 1328 (SDVL…CLSI), 1419 to 1475 (ASSQ…KSRL), and 1543 to 1671 (VHLN…AAAS). Residues 1252-1266 (DTEHALLESTHHSQA) are compositionally biased toward basic and acidic residues. Residues 1460-1470 (DISSNGQSANF) show a composition bias toward polar residues. 2 positions are modified to phosphoserine: S1553 and S1582. Positions 1574–1585 (DRSTPTNCSPDT) are enriched in polar residues. Over residues 1595 to 1606 (PPLPPLLPPLIA) the composition is skewed to pro residues. T1607 bears the Phosphothreonine mark. Phosphoserine occurs at positions 1657, 1662, 1664, 1666, and 1677. 2 disordered regions span residues 1777–1800 (GSSG…AGGK) and 1812–1843 (KRLR…GSPL). Residues 1781–1794 (ADGSQGKSQDSGVQ) are compositionally biased toward polar residues. Basic and acidic residues predominate over residues 1814–1829 (LRLDNKSPEPDTREVT). S1820 bears the Phosphoserine mark.

Belongs to the ICE1 family. In terms of assembly, component of the little elongation complex (LEC), at least composed of ELL (ELL, ELL2 or ELL3), ZC3H8, ICE1 and ICE2. Interacts (via N-terminus domain) with ELL. Interacts (via C-terminus domain) with ICE2 and ZC3H8.

Its subcellular location is the nucleus. The protein resides in the cajal body. Component of the little elongation complex (LEC), a complex required to regulate small nuclear RNA (snRNA) gene transcription by RNA polymerase II and III. Specifically acts as a scaffold protein that promotes the LEC complex formation and recruitment and RNA polymerase II occupancy at snRNA genes in subnuclear bodies. The sequence is that of Little elongation complex subunit 1 (Ice1) from Mus musculus (Mouse).